We begin with the raw amino-acid sequence, 141 residues long: Holo-[acyl-carrier-protein] synthase (141 aa).

Mg(2+) contacts are provided by aspartate 8 and glutamate 61.

The protein belongs to the P-Pant transferase superfamily. AcpS family. Mg(2+) serves as cofactor.

The protein resides in the cytoplasm. It carries out the reaction apo-[ACP] + CoA = holo-[ACP] + adenosine 3',5'-bisphosphate + H(+). In terms of biological role, transfers the 4'-phosphopantetheine moiety from coenzyme A to a Ser of acyl-carrier-protein. The sequence is that of Holo-[acyl-carrier-protein] synthase from Rhodopseudomonas palustris (strain HaA2).